Consider the following 272-residue polypeptide: Centromere protein V-like protein 1 (272 aa).

The span at 1 to 17 (MGRVRNRATAQRRRRKR) shows a compositional bias: basic residues. Disordered stretches follow at residues 1-23 (MGRV…DPPA) and 65-95 (RRVR…KDLD). Positions 79–90 (APTPDPPGPAPS) are enriched in pro residues. Positions 133-246 (HTGGCHCGAV…EEVGGGDPGE (114 aa)) constitute a CENP-V/GFA domain. Zn(2+) is bound by residues Cys137, Cys139, Cys157, Cys159, Cys162, Cys201, and Cys204. Residues 240-272 (GGGDPGEEAAEEHKAIHKTSSQSAPACPREQEQ) form a disordered region.

This sequence belongs to the Gfa family. It depends on Zn(2+) as a cofactor.

The protein is Centromere protein V-like protein 1 of Homo sapiens (Human).